Consider the following 168-residue polypeptide: Venom nerve growth factor (168 aa).

Positions 1 to 18 (MSMLCYTLIIAFLIGIWA) are cleaved as a signal peptide. Positions 19-123 (APKSEDNVSL…ADSLNRNIRA (105 aa)) are excised as a propeptide. Residue asparagine 25 is glycosylated (N-linked (GlcNAc...) asparagine). Residues 48–70 (LKTSQNTDQHSPAPKKAEDQEFG) are disordered. Asparagine 148 carries N-linked (GlcNAc...) asparagine glycosylation.

Belongs to the NGF-beta family. As to quaternary structure, homodimer; non-covalently linked. Expressed by the venom gland.

The protein resides in the secreted. In terms of biological role, nerve growth factor is important for the development and maintenance of the sympathetic and sensory nervous systems. It stimulates division and differentiation of sympathetic and embryonic sensory neurons as well as basal forebrain cholinergic neurons in the brain. Its relevance in the snake venom is not clear. However, it has been shown to inhibit metalloproteinase-dependent proteolysis of platelet glycoprotein Ib alpha, suggesting a metalloproteinase inhibition to prevent metalloprotease autodigestion and/or protection against prey proteases. In Echis ocellatus (Ocellated saw-scaled viper), this protein is Venom nerve growth factor.